Reading from the N-terminus, the 432-residue chain is Probable anion transporter 5 (432 aa).

A signal peptide spans 1 to 23; it reads MKLSNIPQRYVIVFLTFLSTCVC. A run of 11 helical transmembrane segments spans residues 50-70, 78-98, 101-121, 140-160, 164-184, 229-249, 273-293, 305-325, 331-351, 360-380, and 405-425; these read TILS…GWAA, VLLL…LDPN, GLLV…FPSI, ITTS…PALV, GPES…LLWI, LPVW…YVLM, VPYL…DYLI, KFLN…LPMF, VILC…GFAV, YAGI…IIGV, and VVFF…LLFS.

This sequence belongs to the major facilitator superfamily. Sodium/anion cotransporter (TC 2.A.1.14) family. In terms of tissue distribution, ubiquitous.

It is found in the golgi apparatus membrane. Inorganic phosphate and probable anion transporter. The protein is Probable anion transporter 5 (ANTR5) of Arabidopsis thaliana (Mouse-ear cress).